The sequence spans 577 residues: MNIQALLSEKVSQALIAAGAPADCEPQVRQSAKVQFGDYQANGVMAVAKKLGMAPRQLAEQVLSHLDLNGIANKVEIAGPGFINIFLDPAFLADNVNRALQSERLGVTKPQAQTIVVDYSAPNVAKEMHVGHLRSTIIGDASVRTLEFLGHKVIRANHVGDWGTQFGMLIAYLEKQQQENAGEMALADLEGFYREAKKHYDEDEAFAERARSYVVKLQGGDEYFLQMWRKLVDITMSQNQITYDRLNVTLTRDDVMGESLYNPMLPGIVADLKAKGLAVESEGATVVFLDEYKNKEGEPMGVIIQKKDGGYLYTTTDIACAKYRYETLHADRVLYYIDSRQHQHLMQAWTIVRKAGYVPDSVPLEHHMFGMMLGKDGKPFKTRAGGTVKLADLLDEALERARRLVAEKNPDMSADELENLAKVVGIGAVKYADLSKNRTTDYVFDWDNMLAFEGNTAPYMQYAYTRVLSVFRKAGIDENAMIDAPVVIAEDREAQLAARLLQFEETLSVVAREGTPHVMCAYLYDLAGLFSGFYEHCPILSAESEETRNSRLKLALLTAKTLKLGLDTLGIETVERM.

Residues 122 to 132 (PNVAKEMHVGH) carry the 'HIGH' region motif.

Belongs to the class-I aminoacyl-tRNA synthetase family. As to quaternary structure, monomer.

It is found in the cytoplasm. The enzyme catalyses tRNA(Arg) + L-arginine + ATP = L-arginyl-tRNA(Arg) + AMP + diphosphate. The chain is Arginine--tRNA ligase from Klebsiella pneumoniae subsp. pneumoniae (strain ATCC 700721 / MGH 78578).